The chain runs to 150 residues: Large ribosomal subunit protein bL9 (150 aa).

It belongs to the bacterial ribosomal protein bL9 family.

Binds to the 23S rRNA. This chain is Large ribosomal subunit protein bL9, found in Corynebacterium efficiens (strain DSM 44549 / YS-314 / AJ 12310 / JCM 11189 / NBRC 100395).